Reading from the N-terminus, the 182-residue chain is CDP-diacylglycerol--glycerol-3-phosphate 3-phosphatidyltransferase (182 aa).

At 1-12 (MRLNIPTCLTLF) the chain is on the cytoplasmic side. A helical membrane pass occupies residues 13–37 (RLIIVPFFIIVFYLPFSNASFYSAI). Residues 38 to 60 (IFILAALTDWFDGFLARKLNQTT) are Periplasmic-facing. A helical transmembrane segment spans residues 61-81 (CFGAFLDPVADKIIVVIGLIL). Topologically, residues 82–86 (IIEYF) are cytoplasmic. The helical transmembrane segment at 87–107 (HSFWITIPSLIMIIREIIISS) threads the bilayer. At 108–145 (LREWMAEIGKNNLLSVSLISKLKTSIQMLAIFSLLWKE) the chain is on the periplasmic side. A helical membrane pass occupies residues 146–168 (TYIIIIIGILSLYVSSILAFLSM). Over 169-181 (LKYFYIAWRDLFR) the chain is Cytoplasmic.

The protein belongs to the CDP-alcohol phosphatidyltransferase class-I family.

It is found in the cell inner membrane. It catalyses the reaction a CDP-1,2-diacyl-sn-glycerol + sn-glycerol 3-phosphate = a 1,2-diacyl-sn-glycero-3-phospho-(1'-sn-glycero-3'-phosphate) + CMP + H(+). It functions in the pathway phospholipid metabolism; phosphatidylglycerol biosynthesis; phosphatidylglycerol from CDP-diacylglycerol: step 1/2. In terms of biological role, catalyzes the conversion of cytidine diphosphate diacylglycerol (CDP-DG) and glycerol 3-phosphate into phosphatidylglycerol. Essential for the synthesis of anionic phospholipids, thereby playing a role in balancing the ratio of zwitterionic and anionic phospholipids, which is thought to be important for normal membrane function. This chain is CDP-diacylglycerol--glycerol-3-phosphate 3-phosphatidyltransferase, found in Wigglesworthia glossinidia brevipalpis.